A 317-amino-acid chain; its full sequence is Membrane-associated protein VIPP1, chloroplastic (317 aa).

A coiled-coil region spans residues 92–246 (EMNDDLTKMR…SQAEALGQLA (155 aa)). The tract at residues 265–317 (DLAQMKKEISGSSSKGELPPGRTAVSNSGAARPFRDIEIENELNELRKKANEY) is disordered. Over residues 297-317 (PFRDIEIENELNELRKKANEY) the composition is skewed to basic and acidic residues.

It belongs to the PspA/Vipp/IM30 family. Homomultimer. Complex formation involves interaction via the central alpha-helical domain (71-286). As to quaternary structure, (Microbial infection) Interacts with the rice tungro bacilliform virus (RTBV) capsid protein.

It is found in the plastid. The protein resides in the chloroplast inner membrane. Its subcellular location is the chloroplast thylakoid membrane. In terms of biological role, required for plastid vesicle formation and thylakoid membrane biogenesis, but not for functional assembly of thylakoid protein complexes. The protein is Membrane-associated protein VIPP1, chloroplastic of Oryza sativa subsp. japonica (Rice).